Here is a 113-residue protein sequence, read N- to C-terminus: Flagellar transcriptional regulator FlhD (113 aa).

The protein belongs to the FlhD family. As to quaternary structure, homodimer; disulfide-linked. Forms a heterohexamer composed of two FlhC and four FlhD subunits. Each FlhC binds a FlhD dimer, forming a heterotrimer, and a hexamer assembles by dimerization of two heterotrimers.

The protein resides in the cytoplasm. Its function is as follows. Functions in complex with FlhC as a master transcriptional regulator that regulates transcription of several flagellar and non-flagellar operons by binding to their promoter region. Activates expression of class 2 flagellar genes, including fliA, which is a flagellum-specific sigma factor that turns on the class 3 genes. Also regulates genes whose products function in a variety of physiological pathways. The polypeptide is Flagellar transcriptional regulator FlhD (Salmonella typhi).